The chain runs to 535 residues: Methylmalonate-semialdehyde/malonate-semialdehyde dehydrogenase [acylating], mitochondrial (535 aa).

The transit peptide at 1–33 directs the protein to the mitochondrion; the sequence is MAALLAAAAVRARILQVSSKVKSSPTWYSASSF. Residues Lys-47, Lys-52, Lys-55, and Lys-76 each carry the N6-acetyllysine; alternate modification. An N6-succinyllysine; alternate mark is found at Lys-47, Lys-52, Lys-55, and Lys-76. Residue Lys-87 is modified to N6-acetyllysine. Lys-117 and Lys-129 each carry N6-acetyllysine; alternate. Lys-117 and Lys-129 each carry N6-succinyllysine; alternate. NAD(+) is bound by residues Ala-183, Phe-185, Lys-209, Glu-212, Arg-213, and Ser-262. Phosphoserine is present on Ser-262. Residue Lys-298 is modified to N6-acetyllysine. The Nucleophile role is filled by Cys-317. Lys-330 and Lys-331 each carry N6-acetyllysine. N6-acetyllysine; alternate occurs at positions 364 and 376. 2 positions are modified to N6-succinyllysine; alternate: Lys-364 and Lys-376. Ser-380 carries the post-translational modification Phosphoserine. N6-succinyllysine is present on Lys-391. NAD(+) is bound at residue Glu-417. Residue Lys-500 is modified to N6-acetyllysine. Lys-517 carries the N6-succinyllysine modification.

The protein belongs to the aldehyde dehydrogenase family. In terms of assembly, homotetramer.

The protein resides in the mitochondrion. It carries out the reaction 3-oxopropanoate + NAD(+) + CoA + H2O = hydrogencarbonate + acetyl-CoA + NADH + H(+). The catalysed reaction is 2-methyl-3-oxopropanoate + NAD(+) + CoA + H2O = propanoyl-CoA + hydrogencarbonate + NADH + H(+). The enzyme catalyses (R)-2-methyl-3-oxopropanoate + NAD(+) + CoA + H2O = propanoyl-CoA + hydrogencarbonate + NADH + H(+). It catalyses the reaction (S)-2-methyl-3-oxopropanoate + NAD(+) + CoA + H2O = propanoyl-CoA + hydrogencarbonate + NADH + H(+). Its function is as follows. Malonate and methylmalonate semialdehyde dehydrogenase involved in the catabolism of valine, thymine, and compounds catabolized by way of beta-alanine, including uracil and cytidine. The sequence is that of Methylmalonate-semialdehyde/malonate-semialdehyde dehydrogenase [acylating], mitochondrial from Homo sapiens (Human).